Reading from the N-terminus, the 457-residue chain is F-box/LRR-repeat protein At2g42730 (457 aa).

An F-box domain is found at 4–50; that stretch reads KDVISRLPDEVLGRILSLISTKEAVSTSVLSKRWKNMFVLVSNLDID. 3 LRR repeats span residues 265 to 288, 292 to 315, and 318 to 343; these read MDETRMVGVRNGSLGSIPADMRNL, IRNVRILHLSSHTLELLYFSCKEM, and FDSLVSLSIGNDKARGWQMLPLLIKN.

This is F-box/LRR-repeat protein At2g42730 from Arabidopsis thaliana (Mouse-ear cress).